Reading from the N-terminus, the 163-residue chain is ECF RNA polymerase sigma factor SigM (163 aa).

The Polymerase core binding motif lies at 30–43 (DLLQETFMRAYIHI). The segment at residues 127–146 (YKEASHIMNISEANFKSVLF) is a DNA-binding region (H-T-H motif).

It belongs to the sigma-70 factor family. ECF subfamily. Interacts with the N-terminus of YhdL, which is probably its anti-sigma factor. Interacts transiently with the RNAP core.

Functionally, sigma factors are initiation factors that promote the attachment of RNA polymerase (RNAP) to specific initiation sites and are then released. Extracytoplasmic function (ECF) sigma factors are held in an inactive form by a cognate anti-sigma factor (YhdL) until released. This sigma factor is involved in the maintenance of membrane and cell wall integrity in response to environmental stresses including salt, acid, ethanol and antibiotics stress. Partially regulates transcription from a number of genes including disA. Associates with RNAP core under all growth phases. The protein is ECF RNA polymerase sigma factor SigM (sigM) of Bacillus subtilis (strain 168).